The following is a 330-amino-acid chain: Type II methyltransferase M.MthTI (330 aa).

The 326-residue stretch at 3–328 folds into the SAM-dependent MTase C5-type domain; that stretch reads MDIASFFSGA…KKIKKDLEGV (326 aa). Cys73 is an active-site residue.

This sequence belongs to the class I-like SAM-binding methyltransferase superfamily. C5-methyltransferase family.

It catalyses the reaction a 2'-deoxycytidine in DNA + S-adenosyl-L-methionine = a 5-methyl-2'-deoxycytidine in DNA + S-adenosyl-L-homocysteine + H(+). A methylase that recognizes the double-stranded sequence 5'-GGCC-3', methylates C-3 on both strands, and protects the DNA from cleavage by the MthTI endonuclease. The sequence is that of Type II methyltransferase M.MthTI (mthTIM) from Methanothermobacter thermautotrophicus (Methanobacterium thermoformicicum).